Reading from the N-terminus, the 355-residue chain is MSAVPFSKISTPLNALFATIGLLVVAALTTQGLTGQERLVFELLLAAIWLAYVLQLSGTLLSRRRRLSGEMTALVIDLLAVLVPAAAFLFVGSRDRDLYCAIWLLKPLRDSTFFRLLAKVVANESRNLLGVTSVFGIVLFGAALAGYIIERDVQPDKFGSIPQAMWWAVVTLSTTGYGDEIPQSLAGRVLAGLVMMSGIGIFALWAGILATGFYEEVRRQDFVRNWQLVAAVPLFQKLGSAALIEIVRALRPRIVPAGAVICRKGEVGDQMFFIVEGRVTVATPDHPVELGAGNFFGEMALISGDPRSATVSAATEVSLLSLYAVDFQILSSSSPEIAETIRKTALERRGGPPKE.

Over Met-1 to Pro-12 the chain is Cytoplasmic. Residues Leu-13–Thr-30 form a helical membrane-spanning segment. Over Gln-31–Arg-38 the chain is Periplasmic. The chain crosses the membrane as a helical span at residues Leu-39 to Leu-61. The Cytoplasmic segment spans residues Ser-62–Ala-73. Residues Leu-74–Ser-93 form a helical membrane-spanning segment. The helical transmembrane segment at Arg-94–Ser-111 threads the bilayer. Residues Thr-112–Leu-128 are Cytoplasmic-facing. The helical transmembrane segment at Leu-129 to Ile-149 threads the bilayer. At Glu-150 to Ser-160 the chain is on the periplasmic side. The segment at residues Ile-161 to Asp-179 is an intramembrane region (pore-forming). The Selectivity filter motif lies at Thr-174 to Asp-179. Topologically, residues Glu-180–Ser-184 are periplasmic. Residues Leu-185–Leu-209 traverse the membrane as a helical segment. Topologically, residues Ala-210–Glu-355 are cytoplasmic. Residues Gly-297–Glu-298, Arg-307–Ser-308, and Arg-348 contribute to the 3',5'-cyclic AMP site.

The protein belongs to the potassium channel family. Homotetramer.

Its subcellular location is the cell membrane. Functionally, cyclic nucleotide-regulated potassium channel activated by cAMP. This Rhizobium etli (strain ATCC 51251 / DSM 11541 / JCM 21823 / NBRC 15573 / CFN 42) protein is Cyclic nucleotide-gated potassium channel RHE_CH03180.